The chain runs to 360 residues: Arginase, non-hepatic 1 (360 aa).

Positions 122, 145, 147, and 149 each coordinate Mn(2+). Substrate-binding positions include 147–151, 158–160, and D204; these read HADIN and SGN. D253 and D255 together coordinate Mn(2+). T267 and E298 together coordinate substrate.

The protein belongs to the arginase family. Homotrimer. The cofactor is Mn(2+). Expressed at differing tadpole stages in tail, intestine, hindlimb and trunk region. Most abundant in tadpole tail.

The enzyme catalyses L-arginine + H2O = urea + L-ornithine. It functions in the pathway nitrogen metabolism; urea cycle; L-ornithine and urea from L-arginine: step 1/1. Its function is as follows. As well as its role in the urea cycle, may be involved in tissue remodeling. This chain is Arginase, non-hepatic 1 (arg2-a), found in Xenopus laevis (African clawed frog).